Here is a 537-residue protein sequence, read N- to C-terminus: Putative cysteine ligase BshC (537 aa).

Residues 422 to 450 (IEKVEGMIEQQRRLNKDLLDEVAGNQNNI) adopt a coiled-coil conformation.

Belongs to the BshC family.

In terms of biological role, involved in bacillithiol (BSH) biosynthesis. May catalyze the last step of the pathway, the addition of cysteine to glucosamine malate (GlcN-Mal) to generate BSH. This Staphylococcus aureus (strain USA300) protein is Putative cysteine ligase BshC.